Reading from the N-terminus, the 244-residue chain is MNGISNALNGLYDISGVEVGQHFYWQIAGFQVHAQVLITSWVVIAILLGSAVIAVRNPQTIPTAGQNFFEYVLEFIRDVSKTQIGEEYGPWVPFIGTMFLFIFVSNWSGALLPWKIIQLPHGELAAPTNDINTTVALALLTSVAYFYAGLSKKGLGYFSKYIQPTPILLPINILEDFTKPLSLSFRLFGNILADELVVVVLVSLVPSVVPIPVMFLGLFISGIQALIFATLAAAYIGESMEGHH.

5 helical membrane-spanning segments follow: residues Q35–V55, V92–L112, I131–S151, L196–L216, and G217–G237.

This sequence belongs to the ATPase A chain family. F-type ATPases have 2 components, CF(1) - the catalytic core - and CF(0) - the membrane proton channel. CF(1) has five subunits: alpha(3), beta(3), gamma(1), delta(1), epsilon(1). CF(0) has four main subunits: a, b, b' and c.

Its subcellular location is the plastid. The protein localises to the chloroplast thylakoid membrane. Functionally, key component of the proton channel; it plays a direct role in the translocation of protons across the membrane. This is ATP synthase subunit a, chloroplastic from Gossypium barbadense (Sea Island cotton).